A 76-amino-acid chain; its full sequence is uncharacterized protein (76 aa).

EF-hand domains are found at residues 9-44 (EMDEEAEEAFDLFDVTHKGYIDFEDLRRSCAQLGEN) and 43-76 (ENLTKEQLQLMLDLAGTNGKVSREEFAELWIHIS).

It localises to the cytoplasm. It is found in the nucleus. This is an uncharacterized protein from Schizosaccharomyces pombe (strain 972 / ATCC 24843) (Fission yeast).